The following is a 228-amino-acid chain: Ankyrin repeat domain-containing protein 46 (228 aa).

4 ANK repeats span residues 11–40 (QTNV…DPNI), 44–73 (RGRT…DLLA), 77–103 (QGNT…KIDI), and 107–138 (QGAT…EVKG). The chain crosses the membrane as a helical span at residues 195 to 215 (VLLLIFVIALLSLGIAYYVSG).

It localises to the membrane. In Pongo abelii (Sumatran orangutan), this protein is Ankyrin repeat domain-containing protein 46 (ANKRD46).